A 233-amino-acid polypeptide reads, in one-letter code: Cytochrome c biogenesis ATP-binding export protein CcmA (233 aa).

The ABC transporter domain maps to Phe17–Gly233. Gly49 to Ser56 provides a ligand contact to ATP.

The protein belongs to the ABC transporter superfamily. CcmA exporter (TC 3.A.1.107) family. In terms of assembly, the complex is composed of two ATP-binding proteins (CcmA) and two transmembrane proteins (CcmB).

It localises to the cell inner membrane. It catalyses the reaction heme b(in) + ATP + H2O = heme b(out) + ADP + phosphate + H(+). Functionally, part of the ABC transporter complex CcmAB involved in the biogenesis of c-type cytochromes; once thought to export heme, this seems not to be the case, but its exact role is uncertain. Responsible for energy coupling to the transport system. This chain is Cytochrome c biogenesis ATP-binding export protein CcmA, found in Rhodospirillum rubrum (strain ATCC 11170 / ATH 1.1.1 / DSM 467 / LMG 4362 / NCIMB 8255 / S1).